The chain runs to 450 residues: Regulator of sigma-E protease RseP (450 aa).

A helical transmembrane segment spans residues 1-21; it reads MLSILWNLAAFIIALGVLITV. Residue H22 participates in Zn(2+) binding. Residues 22–103 are Periplasmic-facing; the sequence is HEFGHFWVAR…VGQRAAIIAA (82 aa). E23 is a catalytic residue. Zn(2+) is bound at residue H26. A helical transmembrane segment spans residues 104-124; it reads GPVANFIFAIFAYWLVFIIGV. 2 PDZ domains span residues 115-186 and 199-291; these read AYWL…APFG and HWAF…TPDT. Over 125–375 the chain is Cytoplasmic; the sequence is PGVRPVIGEI…QGAGMSAEFG (251 aa). A helical membrane pass occupies residues 376-396; the sequence is VIYYLMFLALISVNLGIINLF. The Periplasmic segment spans residues 397-429; sequence PLPVLDGGHLLFLAIEKLKGGPVSERVQDFSYR. The helical transmembrane segment at 430 to 450 threads the bilayer; the sequence is IGSILLVLLMGLALFNDFSRL.

The protein belongs to the peptidase M50B family. Zn(2+) serves as cofactor.

The protein resides in the cell inner membrane. Its function is as follows. A site-2 regulated intramembrane protease that cleaves the peptide bond between 'Ala-108' and 'Cys-109' in the transmembrane region of RseA. Part of a regulated intramembrane proteolysis (RIP) cascade. Acts on DegS-cleaved RseA to release the cytoplasmic domain of RseA. This provides the cell with sigma-E (RpoE) activity through the proteolysis of RseA. The polypeptide is Regulator of sigma-E protease RseP (rsep) (Salmonella typhimurium (strain 14028s / SGSC 2262)).